Consider the following 461-residue polypeptide: Aspartic proteinase NANA, chloroplast (461 aa).

Asn-86 is a glycosylation site (N-linked (GlcNAc...) asparagine). In terms of domain architecture, Peptidase A1 spans 106–456 (YFTEIRVGTP…DLMASTLSFA (351 aa)). The active site involves Asp-124. Asn-274 carries an N-linked (GlcNAc...) asparagine glycan. Asp-338 is an active-site residue. Residue Asn-386 is glycosylated (N-linked (GlcNAc...) asparagine).

It belongs to the peptidase A1 family.

It is found in the plastid. Its subcellular location is the chloroplast. With respect to regulation, repressed by pepstatin A. Aspartic proteinase that can use azocasein as substrate and regulates endogenous sugar levels (e.g. sucrose, glucose and fructose) by modulating starch accumulation and remobilization. Influences general morphology and development. The protein is Aspartic proteinase NANA, chloroplast of Arabidopsis thaliana (Mouse-ear cress).